The following is a 220-amino-acid chain: Ribose-5-phosphate isomerase A (220 aa).

Residues 28 to 31 (TGST), 81 to 84 (DGAD), and 94 to 97 (KGGG) contribute to the substrate site. Glutamate 103 (proton acceptor) is an active-site residue. Residue lysine 121 participates in substrate binding.

Belongs to the ribose 5-phosphate isomerase family. Homodimer.

The catalysed reaction is aldehydo-D-ribose 5-phosphate = D-ribulose 5-phosphate. It functions in the pathway carbohydrate degradation; pentose phosphate pathway; D-ribose 5-phosphate from D-ribulose 5-phosphate (non-oxidative stage): step 1/1. Functionally, catalyzes the reversible conversion of ribose-5-phosphate to ribulose 5-phosphate. This is Ribose-5-phosphate isomerase A from Shewanella sp. (strain W3-18-1).